The primary structure comprises 230 residues: MSTNSDLRVTLYTYFRSSCSARLRIALALRSISYTSVPINLLKGEQSSTKNTAVNPSATVPTLIIEHVDRSQSPITITQSLAALEYLDEAFPDNPNPLLPPISNPQQRALVRSLASIIACDIQPVTNLRILQRVAPFGVDRAAWSKDLIEAGFAAYEAIARDSAGVFSVGDTITMADVCLIPAVWGAERAGVNLGQYPTIKRVAEALEKENAVKEGHWRTQQDTPTEFRC.

The region spanning 7–95 is the GST N-terminal domain; sequence LRVTLYTYFR…YLDEAFPDNP (89 aa). Glutathione-binding positions include 17–22, Gln46, Val60, 79–80, Gln123, and 127–129; these read SSCSAR, QS, and NLR. A GST C-terminal domain is found at 104-226; the sequence is NPQQRALVRS…HWRTQQDTPT (123 aa).

It belongs to the GST superfamily. Zeta family. The cofactor is glutathione.

The protein localises to the cytoplasm. It carries out the reaction 4-maleylacetoacetate = 4-fumarylacetoacetate. The protein operates within amino-acid degradation; L-phenylalanine degradation; acetoacetate and fumarate from L-phenylalanine: step 5/6. The polypeptide is Maleylacetoacetate isomerase (maiA) (Emericella nidulans (strain FGSC A4 / ATCC 38163 / CBS 112.46 / NRRL 194 / M139) (Aspergillus nidulans)).